The primary structure comprises 164 residues: MD-2-related lipid-recognition protein 3 (164 aa).

A signal peptide spans 1-24 (MAMSHVQPMLLLLVSLFFLPALRG).

As to quaternary structure, interacts with RUB1/NEDD8. Post-translationally, neddylated. In terms of processing, ubiquitinated.

It is found in the vacuole. It localises to the endoplasmic reticulum. Functionally, may be involved in herbivory-mediated responses. May play a role in herbivory-associated molecular pattern (HAMP) recognition. May function is jasmonate (JA) signaling in response to HAMP. May play a role in defense response against the pathogens Altenaria brassicicola and Pseudomonas syringae. This Arabidopsis thaliana (Mouse-ear cress) protein is MD-2-related lipid-recognition protein 3.